Here is a 187-residue protein sequence, read N- to C-terminus: UPF0301 protein VSAL_I0547 (187 aa).

Belongs to the UPF0301 (AlgH) family.

This chain is UPF0301 protein VSAL_I0547, found in Aliivibrio salmonicida (strain LFI1238) (Vibrio salmonicida (strain LFI1238)).